The sequence spans 491 residues: Glutamyl-tRNA(Gln) amidotransferase subunit A (491 aa).

Residues lysine 79 and serine 158 each act as charge relay system in the active site. Serine 182 (acyl-ester intermediate) is an active-site residue.

Belongs to the amidase family. GatA subfamily. As to quaternary structure, heterotrimer of A, B and C subunits.

It catalyses the reaction L-glutamyl-tRNA(Gln) + L-glutamine + ATP + H2O = L-glutaminyl-tRNA(Gln) + L-glutamate + ADP + phosphate + H(+). In terms of biological role, allows the formation of correctly charged Gln-tRNA(Gln) through the transamidation of misacylated Glu-tRNA(Gln) in organisms which lack glutaminyl-tRNA synthetase. The reaction takes place in the presence of glutamine and ATP through an activated gamma-phospho-Glu-tRNA(Gln). The protein is Glutamyl-tRNA(Gln) amidotransferase subunit A of Maricaulis maris (strain MCS10) (Caulobacter maris).